A 64-amino-acid polypeptide reads, in one-letter code: Large ribosomal subunit protein bL33 (64 aa).

This sequence belongs to the bacterial ribosomal protein bL33 family.

The sequence is that of Large ribosomal subunit protein bL33 from Synechococcus sp. (strain JA-3-3Ab) (Cyanobacteria bacterium Yellowstone A-Prime).